A 366-amino-acid polypeptide reads, in one-letter code: Phospho-2-dehydro-3-deoxyheptonate aldolase (366 aa).

It belongs to the class-I DAHP synthase family.

The enzyme catalyses D-erythrose 4-phosphate + phosphoenolpyruvate + H2O = 7-phospho-2-dehydro-3-deoxy-D-arabino-heptonate + phosphate. The protein operates within metabolic intermediate biosynthesis; chorismate biosynthesis; chorismate from D-erythrose 4-phosphate and phosphoenolpyruvate: step 1/7. Stereospecific condensation of phosphoenolpyruvate (PEP) and D-erythrose-4-phosphate (E4P) giving rise to 3-deoxy-D-arabino-heptulosonate-7-phosphate (DAHP). In Corynebacterium glutamicum (strain ATCC 13032 / DSM 20300 / JCM 1318 / BCRC 11384 / CCUG 27702 / LMG 3730 / NBRC 12168 / NCIMB 10025 / NRRL B-2784 / 534), this protein is Phospho-2-dehydro-3-deoxyheptonate aldolase (aroG).